The primary structure comprises 310 residues: GMP synthase [glutamine-hydrolyzing] subunit B (310 aa).

In terms of domain architecture, GMPS ATP-PPase spans 2–185 (FDPKKFIDEA…LGLPDSIVYR (184 aa)). 29–35 (SGGVDSS) is an ATP binding site.

In terms of assembly, heterodimer composed of a glutamine amidotransferase subunit (A) and a GMP-binding subunit (B).

It catalyses the reaction XMP + L-glutamine + ATP + H2O = GMP + L-glutamate + AMP + diphosphate + 2 H(+). Its pathway is purine metabolism; GMP biosynthesis; GMP from XMP (L-Gln route): step 1/1. Functionally, catalyzes the synthesis of GMP from XMP. This is GMP synthase [glutamine-hydrolyzing] subunit B (guaAB) from Methanocaldococcus jannaschii (strain ATCC 43067 / DSM 2661 / JAL-1 / JCM 10045 / NBRC 100440) (Methanococcus jannaschii).